The following is a 338-amino-acid chain: Ferredoxin--NADP reductase (338 aa).

FAD is bound by residues Asp-36, Gln-44, Tyr-49, Val-89, Phe-123, Asp-290, and Thr-331.

Belongs to the ferredoxin--NADP reductase type 2 family. In terms of assembly, homodimer. It depends on FAD as a cofactor.

It carries out the reaction 2 reduced [2Fe-2S]-[ferredoxin] + NADP(+) + H(+) = 2 oxidized [2Fe-2S]-[ferredoxin] + NADPH. The sequence is that of Ferredoxin--NADP reductase from Anaplasma phagocytophilum (strain HZ).